Consider the following 377-residue polypeptide: Polar flagellin F (377 aa).

Coiled coils occupy residues Gln-98–Ser-131 and Asp-302–Thr-339.

This sequence belongs to the bacterial flagellin family. Heteromer of multiple flagellin subunits including FlaA, FlaB/D, FlaC, FlaE and FlaF.

The protein localises to the secreted. The protein resides in the bacterial flagellum. Functionally, flagellin is the subunit protein which polymerizes to form the filaments of bacterial flagella. The polypeptide is Polar flagellin F (flaF) (Vibrio parahaemolyticus serotype O3:K6 (strain RIMD 2210633)).